Consider the following 218-residue polypeptide: Guanylate kinase (218 aa).

The 180-residue stretch at 14 to 193 folds into the Guanylate kinase-like domain; the sequence is GLMLVLSSPS…AFAEVRGIVV (180 aa). 21 to 28 provides a ligand contact to ATP; that stretch reads SPSGAGKS.

Belongs to the guanylate kinase family.

The protein resides in the cytoplasm. The enzyme catalyses GMP + ATP = GDP + ADP. In terms of biological role, essential for recycling GMP and indirectly, cGMP. The polypeptide is Guanylate kinase (gmk) (Mesorhizobium japonicum (strain LMG 29417 / CECT 9101 / MAFF 303099) (Mesorhizobium loti (strain MAFF 303099))).